A 312-amino-acid polypeptide reads, in one-letter code: tRNA dimethylallyltransferase (312 aa).

Position 10 to 17 (10 to 17 (GPTGVGKT)) interacts with ATP. A substrate-binding site is contributed by 12–17 (TGVGKT).

It belongs to the IPP transferase family. As to quaternary structure, monomer. Requires Mg(2+) as cofactor.

The enzyme catalyses adenosine(37) in tRNA + dimethylallyl diphosphate = N(6)-dimethylallyladenosine(37) in tRNA + diphosphate. In terms of biological role, catalyzes the transfer of a dimethylallyl group onto the adenine at position 37 in tRNAs that read codons beginning with uridine, leading to the formation of N6-(dimethylallyl)adenosine (i(6)A). In Coprothermobacter proteolyticus (strain ATCC 35245 / DSM 5265 / OCM 4 / BT), this protein is tRNA dimethylallyltransferase.